Reading from the N-terminus, the 114-residue chain is UPF0102 protein Shew_0226 (114 aa).

Belongs to the UPF0102 family.

The protein is UPF0102 protein Shew_0226 of Shewanella loihica (strain ATCC BAA-1088 / PV-4).